Consider the following 131-residue polypeptide: MAGTKPGDLGGIKVGQYIVIDGIACKVMDYAHSKPGKHGGAKVRLVAVGIFEPVKKEHVGPASSRIDIPIIDKRKGQVLALMGDNVQLMDMESYETLEIPMPDDVEGIESGVEVEYFEAMDRYKITRVISK.

K37 carries the hypusine modification.

This sequence belongs to the eIF-5A family.

It localises to the cytoplasm. Functionally, functions by promoting the formation of the first peptide bond. The protein is Translation initiation factor 5A (eIF5A) of Methanococcus maripaludis (strain C6 / ATCC BAA-1332).